A 187-amino-acid chain; its full sequence is Crossover junction endodeoxyribonuclease RuvC (187 aa).

Catalysis depends on residues D7, E67, and D140. D7, E67, and D140 together coordinate Mg(2+).

It belongs to the RuvC family. Homodimer which binds Holliday junction (HJ) DNA. The HJ becomes 2-fold symmetrical on binding to RuvC with unstacked arms; it has a different conformation from HJ DNA in complex with RuvA. In the full resolvosome a probable DNA-RuvA(4)-RuvB(12)-RuvC(2) complex forms which resolves the HJ. Requires Mg(2+) as cofactor.

It is found in the cytoplasm. It catalyses the reaction Endonucleolytic cleavage at a junction such as a reciprocal single-stranded crossover between two homologous DNA duplexes (Holliday junction).. The RuvA-RuvB-RuvC complex processes Holliday junction (HJ) DNA during genetic recombination and DNA repair. Endonuclease that resolves HJ intermediates. Cleaves cruciform DNA by making single-stranded nicks across the HJ at symmetrical positions within the homologous arms, yielding a 5'-phosphate and a 3'-hydroxyl group; requires a central core of homology in the junction. The consensus cleavage sequence is 5'-(A/T)TT(C/G)-3'. Cleavage occurs on the 3'-side of the TT dinucleotide at the point of strand exchange. HJ branch migration catalyzed by RuvA-RuvB allows RuvC to scan DNA until it finds its consensus sequence, where it cleaves and resolves the cruciform DNA. The chain is Crossover junction endodeoxyribonuclease RuvC from Chlorobium phaeobacteroides (strain DSM 266 / SMG 266 / 2430).